Consider the following 347-residue polypeptide: 3-isopropylmalate dehydrogenase (347 aa).

The substrate site is built by R87, R97, R121, and D212. Residues D212, D236, and D240 each coordinate Mg(2+). 272 to 284 contacts NAD(+); that stretch reads GSAPDIAGQGTAD.

The protein belongs to the isocitrate and isopropylmalate dehydrogenases family. LeuB type 2 subfamily. As to quaternary structure, homodimer. Mg(2+) is required as a cofactor. Requires Mn(2+) as cofactor.

Its subcellular location is the cytoplasm. It carries out the reaction (2R,3S)-3-isopropylmalate + NAD(+) = 4-methyl-2-oxopentanoate + CO2 + NADH. It participates in amino-acid biosynthesis; L-leucine biosynthesis; L-leucine from 3-methyl-2-oxobutanoate: step 3/4. Functionally, catalyzes the oxidation of 3-carboxy-2-hydroxy-4-methylpentanoate (3-isopropylmalate) to 3-carboxy-4-methyl-2-oxopentanoate. The product decarboxylates to 4-methyl-2 oxopentanoate. The protein is 3-isopropylmalate dehydrogenase of Saccharopolyspora erythraea (strain ATCC 11635 / DSM 40517 / JCM 4748 / NBRC 13426 / NCIMB 8594 / NRRL 2338).